Reading from the N-terminus, the 105-residue chain is MKTLVIACVALVLVVVHGEVIEEVNEKQLQESVEEKYSLLQRLEKLDEAITAEENRNSRVRRCGSKRAWCKEKKDCCCGYNCVYAWYNQQSSCERKWKYLFTGEC.

Residues 1-18 (MKTLVIACVALVLVVVHG) form the signal peptide. A propeptide spanning residues 19 to 60 (EVIEEVNEKQLQESVEEKYSLLQRLEKLDEAITAEENRNSRV) is cleaved from the precursor. Cystine bridges form between cysteine 63/cysteine 77, cysteine 70/cysteine 82, cysteine 76/cysteine 93, and cysteine 78/cysteine 105.

It belongs to the neurotoxin 06 (delta-actx) family. As to expression, expressed by the venom gland.

It is found in the secreted. Its function is as follows. Selectively slows channel inactivation of mammalian Nav1.1/SCN1A, Nav1.3/SCN3A, and Nav1.6/SCN8A and shows higher affinity for insect Nav1/para channels (site 3). Induces tonic repetitive firing of nerve impulses in insect neurons accompanied by plateau potentials. This Macrothele gigas (Japanese funnel web spider) protein is Delta-hexatoxin-Mg1a.